A 395-amino-acid chain; its full sequence is Acid ceramidase (395 aa).

The signal sequence occupies residues M1–A21. A disulfide bridge links C31 with C340. Catalysis depends on C143, which acts as the Nucleophile. N-linked (GlcNAc...) asparagine glycosylation is found at N173, N259, N286, and N348. An intrachain disulfide couples C388 to C392.

It belongs to the acid ceramidase family. As to quaternary structure, heterodimer; disulfide-linked. The heterodimer is composed of the disulfide-linked alpha and beta chains produced by autocatalytic cleavage of the precursor. N-glycosylated. In terms of processing, proteolytically cleaved into two chains alpha and beta that remain associated via a disulfide bond. Cleavage gives rise to a conformation change that activates the enzyme. The same catalytic Cys residue mediates the autoproteolytic cleavage and subsequent hydrolysis of lipid substrates. The beta chain may undergo an additional C-terminal processing.

The protein resides in the lysosome. Its subcellular location is the secreted. It carries out the reaction an N-acylsphing-4-enine + H2O = sphing-4-enine + a fatty acid. The enzyme catalyses N-dodecanoylsphing-4-enine + H2O = dodecanoate + sphing-4-enine. It catalyses the reaction N-tetradecanoylsphing-4-enine + H2O = tetradecanoate + sphing-4-enine. The catalysed reaction is N-hexadecanoylsphing-4-enine + H2O = sphing-4-enine + hexadecanoate. It carries out the reaction N-octadecanoylsphing-4-enine + H2O = sphing-4-enine + octadecanoate. The enzyme catalyses N-dodecanoyl-(4R)-hydroxysphinganine + H2O = (4R)-hydroxysphinganine + dodecanoate. It catalyses the reaction N-(dodecanoyl)-sphinganine + H2O = dodecanoate + sphinganine. The catalysed reaction is N-(acetyl)-sphing-4-enine + H2O = sphing-4-enine + acetate. It carries out the reaction N-(hexanoyl)sphing-4-enine + H2O = hexanoate + sphing-4-enine. The enzyme catalyses N-octanoylsphing-4-enine + H2O = octanoate + sphing-4-enine. It catalyses the reaction N-(9Z-octadecenoyl)-sphing-4-enine + H2O = sphing-4-enine + (9Z)-octadecenoate. The catalysed reaction is N-dodecanoylethanolamine + H2O = dodecanoate + ethanolamine. It functions in the pathway lipid metabolism; sphingolipid metabolism. In terms of biological role, lysosomal ceramidase that hydrolyzes sphingolipid ceramides into sphingosine and free fatty acids at acidic pH. Ceramides, sphingosine, and its phosphorylated form sphingosine-1-phosphate are bioactive lipids that mediate cellular signaling pathways regulating several biological processes including cell proliferation, apoptosis and differentiation. Has a higher catalytic efficiency towards C12-ceramides versus other ceramides. Also catalyzes the reverse reaction allowing the synthesis of ceramides from fatty acids and sphingosine. For the reverse synthetic reaction, the natural sphingosine D-erythro isomer is more efficiently utilized as a substrate compared to D-erythro-dihydrosphingosine and D-erythro-phytosphingosine, while the fatty acids with chain lengths of 12 or 14 carbons are the most efficiently used. Also has an N-acylethanolamine hydrolase activity. By regulating the levels of ceramides, sphingosine and sphingosine-1-phosphate in the epidermis, mediates the calcium-induced differentiation of epidermal keratinocytes. Also indirectly regulates tumor necrosis factor/TNF-induced apoptosis. By regulating the intracellular balance between ceramides and sphingosine, in adrenocortical cells, probably also acts as a regulator of steroidogenesis. This Heterocephalus glaber (Naked mole rat) protein is Acid ceramidase.